We begin with the raw amino-acid sequence, 842 residues long: Glycogen phosphorylase, muscle form (842 aa).

Ser-2 bears the N-acetylserine mark. Ser-15 is subject to Phosphoserine; by PHK; in form phosphorylase A. A Phosphoserine modification is found at Ser-26. Asp-43 and Tyr-76 together coordinate AMP. Tyr-204 and Tyr-227 each carry phosphotyrosine. Residue 310 to 319 coordinates AMP; sequence RRFKSSKFGC. Ser-430 carries the phosphoserine modification. Residue Tyr-473 is modified to Phosphotyrosine. Position 514 is a phosphoserine (Ser-514). Lys-681 carries the post-translational modification N6-(pyridoxal phosphate)lysine. A phosphoserine mark is found at Ser-747 and Ser-748.

It belongs to the glycogen phosphorylase family. As to quaternary structure, homodimer. Homotetramer; to form the enzymatically active phosphorylase A. It depends on pyridoxal 5'-phosphate as a cofactor. Phosphorylation of Ser-15 converts phosphorylase B (unphosphorylated) to phosphorylase A.

The enzyme catalyses [(1-&gt;4)-alpha-D-glucosyl](n) + phosphate = [(1-&gt;4)-alpha-D-glucosyl](n-1) + alpha-D-glucose 1-phosphate. Allosterically regulated through the non-covalent binding of metabolites, being activated by AMP and inhibited by ATP, ADP, and glucose-6-phosphate. The activity is also controlled by post-translational modifications including phosphorylation. Functionally, allosteric enzyme that catalyzes the rate-limiting step in glycogen catabolism, the phosphorolytic cleavage of glycogen to produce glucose-1-phosphate, and plays a central role in maintaining cellular and organismal glucose homeostasis. This chain is Glycogen phosphorylase, muscle form, found in Rattus norvegicus (Rat).